Here is a 243-residue protein sequence, read N- to C-terminus: Probable aquaporin SIP1-2 (243 aa).

Helical transmembrane passes span V12 to V32 and W42 to I62. Positions N72–C74 match the NPA 1 motif. A run of 3 helical transmembrane segments spans residues F90–I110, G135–L155, and L162–F182. The NPA 2 motif lies at N188–A190. A helical membrane pass occupies residues V210–F230.

Belongs to the MIP/aquaporin (TC 1.A.8) family. SIP (TC 1.A.8.10) subfamily. Expressed in roots and above ground. Expressed in elongating regions of the root tips, cotyledons, minor veins and hydathode cells of the rosette leaves. Weakly expressed in vascular tissues of the flower petals, filaments of stamens, upper part of the styles and receptacles of the siliques.

Its subcellular location is the endoplasmic reticulum membrane. Water channel required to facilitate the transport of water across cell membrane. In Arabidopsis thaliana (Mouse-ear cress), this protein is Probable aquaporin SIP1-2 (SIP1-2).